Reading from the N-terminus, the 97-residue chain is U6-theraphotoxin-Hhn1a 2 (97 aa).

The first 33 residues, 1–33 (MLIKQFSRRPKNMKVQILLAFAALFVLAVGSYA), serve as a signal peptide directing secretion. Positions 34 to 61 (SESKKLDLRDASFSAMFSADYQLNPQER) are excised as a propeptide. 3 disulfides stabilise this stretch: Cys63-Cys77, Cys70-Cys82, and Cys76-Cys89.

It belongs to the neurotoxin 10 (Hwtx-1) family. 12 (Hntx-12) subfamily. Expressed by the venom gland.

It is found in the secreted. Functionally, ion channel inhibitor. This Cyriopagopus hainanus (Chinese bird spider) protein is U6-theraphotoxin-Hhn1a 2.